Here is a 436-residue protein sequence, read N- to C-terminus: DEAD-box ATP-dependent RNA helicase CshB (436 aa).

A Q motif motif is present at residues 4–32 (QTFTQYDFKPFLIDAVRELRFTEPTGIQQ). One can recognise a Helicase ATP-binding domain in the interval 35–209 (FPVVKKGVSV…KKYMENPEHI (175 aa)). Position 48 to 55 (48 to 55 (SQTGSGKT)) interacts with ATP. Positions 157-160 (DEAD) match the DEAD box motif. In terms of domain architecture, Helicase C-terminal spans 240–388 (MLLQFKPYLA…WADLGERRRR (149 aa)). Positions 385–436 (RRRRKSRKKPNDELDVMATKVIKKPKKVKPNYKRKLATERDKVKRKYSNKKR) are disordered. Composition is skewed to basic residues over residues 405–419 (VIKK…YKRK) and 427–436 (VKRKYSNKKR).

Belongs to the DEAD box helicase family. CshB subfamily.

It is found in the cytoplasm. The enzyme catalyses ATP + H2O = ADP + phosphate + H(+). Probable DEAD-box RNA helicase. May work in conjunction with the cold shock proteins to ensure proper initiation of transcription at low and optimal temperatures. Unwinds dsRNA in both 5'- and 3'-directions and shows RNA-dependent ATPase activity. Probably has a somewhat redundant function with CshA, as cshA can partially complement the growth effects of a cshB deletion. The sequence is that of DEAD-box ATP-dependent RNA helicase CshB from Bacillus cereus (strain ATCC 14579 / DSM 31 / CCUG 7414 / JCM 2152 / NBRC 15305 / NCIMB 9373 / NCTC 2599 / NRRL B-3711).